Here is a 178-residue protein sequence, read N- to C-terminus: ATP synthase subunit delta (178 aa).

This sequence belongs to the ATPase delta chain family. In terms of assembly, F-type ATPases have 2 components, F(1) - the catalytic core - and F(0) - the membrane proton channel. F(1) has five subunits: alpha(3), beta(3), gamma(1), delta(1), epsilon(1). F(0) has three main subunits: a(1), b(2) and c(10-14). The alpha and beta chains form an alternating ring which encloses part of the gamma chain. F(1) is attached to F(0) by a central stalk formed by the gamma and epsilon chains, while a peripheral stalk is formed by the delta and b chains.

The protein resides in the cell membrane. F(1)F(0) ATP synthase produces ATP from ADP in the presence of a proton or sodium gradient. F-type ATPases consist of two structural domains, F(1) containing the extramembraneous catalytic core and F(0) containing the membrane proton channel, linked together by a central stalk and a peripheral stalk. During catalysis, ATP synthesis in the catalytic domain of F(1) is coupled via a rotary mechanism of the central stalk subunits to proton translocation. Functionally, this protein is part of the stalk that links CF(0) to CF(1). It either transmits conformational changes from CF(0) to CF(1) or is implicated in proton conduction. This chain is ATP synthase subunit delta, found in Mycoplasma pneumoniae (strain ATCC 29342 / M129 / Subtype 1) (Mycoplasmoides pneumoniae).